A 68-amino-acid polypeptide reads, in one-letter code: DNA-directed RNA polymerase subunit omega (68 aa).

It belongs to the RNA polymerase subunit omega family. In terms of assembly, the RNAP catalytic core consists of 2 alpha, 1 beta, 1 beta' and 1 omega subunit. When a sigma factor is associated with the core the holoenzyme is formed, which can initiate transcription.

It carries out the reaction RNA(n) + a ribonucleoside 5'-triphosphate = RNA(n+1) + diphosphate. Promotes RNA polymerase assembly. Latches the N- and C-terminal regions of the beta' subunit thereby facilitating its interaction with the beta and alpha subunits. In Neisseria gonorrhoeae (strain NCCP11945), this protein is DNA-directed RNA polymerase subunit omega.